We begin with the raw amino-acid sequence, 199 residues long: uncharacterized protein (199 aa).

This is an uncharacterized protein from Methanocaldococcus jannaschii (strain ATCC 43067 / DSM 2661 / JAL-1 / JCM 10045 / NBRC 100440) (Methanococcus jannaschii).